Consider the following 1503-residue polypeptide: DNA-directed RNA polymerase subunit beta' (1503 aa).

Positions 60, 62, 75, and 78 each coordinate Zn(2+). Residues D626, D628, and D630 each contribute to the Mg(2+) site. Zn(2+)-binding residues include C1002, C1075, C1082, and C1085. The segment at E1439–F1503 is disordered. A compositionally biased stretch (acidic residues) spans G1486 to F1503.

The protein belongs to the RNA polymerase beta' chain family. In terms of assembly, the RNAP catalytic core consists of 2 alpha, 1 beta, 1 beta' and 1 omega subunit. When a sigma factor is associated with the core the holoenzyme is formed, which can initiate transcription. Requires Mg(2+) as cofactor. The cofactor is Zn(2+).

It carries out the reaction RNA(n) + a ribonucleoside 5'-triphosphate = RNA(n+1) + diphosphate. Functionally, DNA-dependent RNA polymerase catalyzes the transcription of DNA into RNA using the four ribonucleoside triphosphates as substrates. This chain is DNA-directed RNA polymerase subunit beta', found in Chloroflexus aurantiacus (strain ATCC 29364 / DSM 637 / Y-400-fl).